The following is a 492-amino-acid chain: Glycylpeptide N-tetradecanoyltransferase (492 aa).

The span at 1 to 22 (MSDSKDRKGKAPEGQSSEKKDG) shows a compositional bias: basic and acidic residues. The tract at residues 1–45 (MSDSKDRKGKAPEGQSSEKKDGAVNITPQMAESLLENNPALRNET) is disordered. Residues 82-85 (YKFW), 215-217 (LCI), and 223-227 (SKRLT) each bind tetradecanoyl-CoA. The Proton acceptor; via carboxylate role is filled by Leu-492.

The protein belongs to the NMT family. Monomer.

Its subcellular location is the cytoplasm. The catalysed reaction is N-terminal glycyl-[protein] + tetradecanoyl-CoA = N-tetradecanoylglycyl-[protein] + CoA + H(+). In terms of biological role, adds a myristoyl group to the N-terminal glycine residue of certain cellular proteins. In Aspergillus fumigatus (strain ATCC MYA-4609 / CBS 101355 / FGSC A1100 / Af293) (Neosartorya fumigata), this protein is Glycylpeptide N-tetradecanoyltransferase (nmt1).